We begin with the raw amino-acid sequence, 134 residues long: Probable 4-amino-4-deoxy-L-arabinose-phosphoundecaprenol flippase subunit ArnF (134 aa).

Over 1–5 (MNRRR) the chain is Cytoplasmic. A helical membrane pass occupies residues 6 to 26 (GILFALASVLLVSVAQLSMRW). Topologically, residues 27–45 (SMTRLPRPDQWLSVPSVDS) are periplasmic. Residues 46–66 (VALAVVLAAIFAYALSMLCWL) traverse the membrane as a helical segment. Residues 67-77 (AALRDLPLGRA) are Cytoplasmic-facing. A helical transmembrane segment spans residues 78–98 (YSLLSISYALVYLLAASLPLF). Topologically, residues 99 to 101 (NES) are periplasmic. Residues 102–122 (FSFSKSLGVALVMLGVITINT) traverse the membrane as a helical segment. The Cytoplasmic portion of the chain corresponds to 123 to 134 (RPARAPELRSSP).

It belongs to the ArnF family. As to quaternary structure, heterodimer of ArnE and ArnF.

The protein localises to the cell inner membrane. The protein operates within bacterial outer membrane biogenesis; lipopolysaccharide biosynthesis. Its function is as follows. Translocates 4-amino-4-deoxy-L-arabinose-phosphoundecaprenol (alpha-L-Ara4N-phosphoundecaprenol) from the cytoplasmic to the periplasmic side of the inner membrane. The chain is Probable 4-amino-4-deoxy-L-arabinose-phosphoundecaprenol flippase subunit ArnF from Pseudomonas fluorescens (strain Pf0-1).